A 117-amino-acid polypeptide reads, in one-letter code: Large ribosomal subunit protein uL18 (117 aa).

It belongs to the universal ribosomal protein uL18 family. In terms of assembly, part of the 50S ribosomal subunit; part of the 5S rRNA/L5/L18/L25 subcomplex. Contacts the 5S and 23S rRNAs.

This is one of the proteins that bind and probably mediate the attachment of the 5S RNA into the large ribosomal subunit, where it forms part of the central protuberance. This Pasteurella multocida (strain Pm70) protein is Large ribosomal subunit protein uL18.